The following is a 201-amino-acid chain: LexA repressor (201 aa).

A DNA-binding region (H-T-H motif) is located at residues 28–48 (LREIAAQLGISGTLGVMKHLE). Active-site for autocatalytic cleavage activity residues include serine 120 and lysine 157.

This sequence belongs to the peptidase S24 family. In terms of assembly, homodimer.

It catalyses the reaction Hydrolysis of Ala-|-Gly bond in repressor LexA.. Functionally, represses a number of genes involved in the response to DNA damage (SOS response), including recA and lexA. In the presence of single-stranded DNA, RecA interacts with LexA causing an autocatalytic cleavage which disrupts the DNA-binding part of LexA, leading to derepression of the SOS regulon and eventually DNA repair. This is LexA repressor from Citrifermentans bemidjiense (strain ATCC BAA-1014 / DSM 16622 / JCM 12645 / Bem) (Geobacter bemidjiensis).